Reading from the N-terminus, the 64-residue chain is DNA gyrase inhibitor YacG (64 aa).

Zn(2+)-binding residues include C7, C10, C26, and C30. A disordered region spans residues 44–64 (RIPGEIDPELLPYPEEGEQWQ).

It belongs to the DNA gyrase inhibitor YacG family. In terms of assembly, interacts with GyrB. Zn(2+) serves as cofactor.

In terms of biological role, inhibits all the catalytic activities of DNA gyrase by preventing its interaction with DNA. Acts by binding directly to the C-terminal domain of GyrB, which probably disrupts DNA binding by the gyrase. This is DNA gyrase inhibitor YacG from Aeromonas hydrophila subsp. hydrophila (strain ATCC 7966 / DSM 30187 / BCRC 13018 / CCUG 14551 / JCM 1027 / KCTC 2358 / NCIMB 9240 / NCTC 8049).